The following is a 466-amino-acid chain: Argininosuccinate lyase (466 aa).

It belongs to the lyase 1 family. Argininosuccinate lyase subfamily.

It is found in the cytoplasm. It carries out the reaction 2-(N(omega)-L-arginino)succinate = fumarate + L-arginine. The protein operates within amino-acid biosynthesis; L-arginine biosynthesis; L-arginine from L-ornithine and carbamoyl phosphate: step 3/3. The protein is Argininosuccinate lyase of Synechococcus sp. (strain ATCC 27144 / PCC 6301 / SAUG 1402/1) (Anacystis nidulans).